The primary structure comprises 317 residues: Annexin A13 (317 aa).

The N-myristoyl glycine moiety is linked to residue glycine 2. Annexin repeat units lie at residues 15-86, 87-158, 170-242, and 246-317; these read FDAD…ALLD, RPNE…SLLQ, ELAG…TIVR, and DLEG…ALLH.

The protein belongs to the annexin family. In terms of assembly, monomer and homodimer. In terms of tissue distribution, detected on the tips of microvilli in small intestine (at protein level).

The protein localises to the apical cell membrane. The protein resides in the cell membrane. It is found in the cytoplasmic vesicle. Binds to membranes enriched in phosphatidylserine or phosphatidylglycerol in a calcium-dependent manner. Half-maximal membrane binding requires about 60 uM calcium. Does not bind to membranes that lack phospholipids with an acidic headgroup. This is Annexin A13 (Anxa13) from Mus musculus (Mouse).